The sequence spans 444 residues: MAQFFKAAPTNSIKNHILKNIKVEKLDHRGRGLAYFQNKPLFIDGALAGELLEVQIVESKKRYSKGKIKKIIKASELRITAACPHYQECGGCDLQHLNQAAQIQIKSDGLLSLFQRFAKKVPQQLEKPIIDKAWEYRRTARFGLQFDKKNKQLKMGLRRAQSNELIDQKVCPVLLPELECLIPPLKILLNSLQCKAHLGHVELLYADQGAVVLLRHMKTLTSPDLQLITAFSALQKVNFFGQASSNQSVCLAGEANLSYRLPEWDCSLSFTPTDFLQVNSDINKKMVSQAMQWLALEKNDSVLDLFCGLGNFTLPIARQVESVVGIEGVQQMVDRATANAQLNNLQNARFYQADLSGENLIEQEWANQNFNKVLLDPARAGALDCLAFIAQKKPSHILYVSCDPLTLARDSQVLLDKGYKLDKLGLLDMFPQTAHMESMALFTG.

A TRAM domain is found at 11 to 70 (NSIKNHILKNIKVEKLDHRGRGLAYFQNKPLFIDGALAGELLEVQIVESKKRYSKGKIKK). [4Fe-4S] cluster-binding residues include Cys-83, Cys-89, Cys-92, and Cys-171. Residues Gln-277, Phe-306, Asn-311, Glu-327, Asp-354, and Asp-376 each contribute to the S-adenosyl-L-methionine site. The Nucleophile role is filled by Cys-402.

Belongs to the class I-like SAM-binding methyltransferase superfamily. RNA M5U methyltransferase family. RlmD subfamily.

It carries out the reaction uridine(1939) in 23S rRNA + S-adenosyl-L-methionine = 5-methyluridine(1939) in 23S rRNA + S-adenosyl-L-homocysteine + H(+). Catalyzes the formation of 5-methyl-uridine at position 1939 (m5U1939) in 23S rRNA. The polypeptide is 23S rRNA (uracil(1939)-C(5))-methyltransferase RlmD (Psychromonas ingrahamii (strain DSM 17664 / CCUG 51855 / 37)).